The following is a 689-amino-acid chain: Glycine--tRNA ligase beta subunit (689 aa).

Belongs to the class-II aminoacyl-tRNA synthetase family. Tetramer of two alpha and two beta subunits.

It is found in the cytoplasm. It carries out the reaction tRNA(Gly) + glycine + ATP = glycyl-tRNA(Gly) + AMP + diphosphate. The protein is Glycine--tRNA ligase beta subunit of Escherichia coli O127:H6 (strain E2348/69 / EPEC).